Reading from the N-terminus, the 262-residue chain is Thiamine thiazole synthase (262 aa).

NAD(+)-binding positions include A36, 55-56, G63, V127, and 154-156; these read EK and HVD. The Fe cation site is built by D156 and H171. Position 224 (M224) interacts with NAD(+). R234 is a glycine binding site.

It belongs to the THI4 family. Homooctamer; tetramer of dimers. Fe(2+) is required as a cofactor.

The enzyme catalyses hydrogen sulfide + glycine + NAD(+) = ADP-5-ethyl-4-methylthiazole-2-carboxylate + nicotinamide + 3 H2O + H(+). It functions in the pathway cofactor biosynthesis; thiamine diphosphate biosynthesis. Its function is as follows. Involved in the biosynthesis of the thiazole moiety of thiamine. Catalyzes the conversion of NAD and glycine to adenosine diphosphate 5-(2-hydroxyethyl)-4-methylthiazole-2-carboxylate (ADT), an adenylated thiazole intermediate, using free sulfide as a source of sulfur. This is Thiamine thiazole synthase from Methanothrix thermoacetophila (strain DSM 6194 / JCM 14653 / NBRC 101360 / PT) (Methanosaeta thermophila).